Here is a 541-residue protein sequence, read N- to C-terminus: MSQLVECVPNFSEGNNQEVIDAISRAISQTPGCVLLDVDAGPSTNRTVYTFVGQPECVVEGALHAARTASQLIDMSKHKGEHPRMGALDVCPFIPVRGVSMEECVLCAKAFGQRLAEELNVPVYLYGEAAQTPSRQTLPAIRAGEYEALPEKLKQAEWVPDFGPSSFVPSWGATVTGARKFLIAFNINLLSTKEQAHRIALNLREQGRGKDQPGRLKKVQGIGWYLEEKNLAQVSTNLLDFEVTALHTVFEEARREAQELNLPVVGSQLVGLVPLKALLDAAAFYCDKEKLFVLEEEHRIRLVVNRLGLDSLAPFDPKERIIEYLVPDSGPEQSLLDTSLRGFVREVGARSAAPGGGSVAAAVAALGAALASMVGQMTYGRRQFDHLDSTMRRLIPPFHAASAQLTSLVDADARAFAACLEAIKLPKNTPEERDRRACALQEGLRQAVAVPLKLAETVSQLWPALQELAHCGNLSCLSDLQVAAKALETGVFGAYFNVLINLKDMTDDVFKEKTHHRISSLLQEAKTQAALVLGSLEARKE.

The formiminotransferase N-subdomain stretch occupies residues 1-181 (MSQLVECVPN…GATVTGARKF (181 aa)). The active-site For formimidoyltransferase activity is H82. 163–172 (GPSSFVPSWG) contributes to the folate binding site. A formiminotransferase C-subdomain region spans residues 182 to 326 (LIAFNINLLS…PKERIIEYLV (145 aa)). The linker stretch occupies residues 327 to 334 (PDSGPEQS). The interval 335–541 (LLDTSLRGFV…VLGSLEARKE (207 aa)) is cyclodeaminase/cyclohydrolase. Residue D412 is the For cyclodeaminase activity of the active site. Residue S520 is modified to Phosphoserine.

This sequence in the C-terminal section; belongs to the cyclodeaminase/cyclohydrolase family. In the N-terminal section; belongs to the formiminotransferase family. Homooctamer, including four polyglutamate binding sites. The subunits are arranged as a tetramer of dimers, and form a planar ring-shaped structure.

The protein resides in the cytoplasm. It localises to the cytoskeleton. The protein localises to the microtubule organizing center. It is found in the centrosome. Its subcellular location is the centriole. The protein resides in the golgi apparatus. It carries out the reaction 5-formimidoyltetrahydrofolate + L-glutamate = N-formimidoyl-L-glutamate + (6S)-5,6,7,8-tetrahydrofolate. The enzyme catalyses (6S)-5-formyl-5,6,7,8-tetrahydrofolate + L-glutamate = N-formyl-L-glutamate + (6S)-5,6,7,8-tetrahydrofolate + H(+). The catalysed reaction is 5-formimidoyltetrahydrofolate + 2 H(+) = (6R)-5,10-methenyltetrahydrofolate + NH4(+). Its pathway is amino-acid degradation; L-histidine degradation into L-glutamate; L-glutamate from N-formimidoyl-L-glutamate (transferase route): step 1/1. It participates in one-carbon metabolism; tetrahydrofolate interconversion. In terms of biological role, folate-dependent enzyme, that displays both transferase and deaminase activity. Serves to channel one-carbon units from formiminoglutamate to the folate pool. Binds and promotes bundling of vimentin filaments originating from the Golgi. The sequence is that of Formimidoyltransferase-cyclodeaminase (Ftcd) from Mus musculus (Mouse).